The sequence spans 152 residues: Ribosome maturation factor RimP (152 aa).

It belongs to the RimP family.

It localises to the cytoplasm. Functionally, required for maturation of 30S ribosomal subunits. This is Ribosome maturation factor RimP from Salmonella arizonae (strain ATCC BAA-731 / CDC346-86 / RSK2980).